A 391-amino-acid polypeptide reads, in one-letter code: Immunoglobulin heavy constant alpha 2 (391 aa).

Topologically, residues 1–357 (ASPTSPKVFP…TPGANLWPTT (357 aa)) are extracellular. Ig-like domains lie at 6 to 98 (PKVF…QDVT), 112 to 207 (PRLS…ANIT), and 215 to 317 (PEVH…KTID). Cysteines 26 and 85 form a disulfide. The N-linked (GlcNAc...) asparagine glycan is linked to Asn-47. An N-linked (GlcNAc...) (complex) asparagine glycan is attached at Asn-92. 2 disulfides stabilise this stretch: Cys-110–Cys-167 and Cys-134–Cys-191. An N-linked (GlcNAc...) asparagine glycan is attached at Asn-131. N-linked (GlcNAc...) (complex) asparagine glycosylation occurs at Asn-205. An intrachain disulfide couples Cys-237 to Cys-300. The N-linked (GlcNAc...) (complex) asparagine glycan is linked to Asp-327. The chain crosses the membrane as a helical span at residues 358-379 (ITFLTLFLLSLFYSTALTVTSV). The Cytoplasmic segment spans residues 380–391 (RGPSGKREGPQY).

In terms of assembly, immunoglobulins are composed of two identical heavy chains and two identical light chains; disulfide-linked. Monomeric or polymeric. Part of the secretory IgA (sIgA) complex that consists of two, four or five IgA monomers, and two additional non-Ig polypeptides, namely the JCHAIN and the secretory component (the proteolytic product of PIGR).

It localises to the secreted. Its subcellular location is the cell membrane. In terms of biological role, constant region of immunoglobulin heavy chains. Immunoglobulins, also known as antibodies, are membrane-bound or secreted glycoproteins produced by B lymphocytes. In the recognition phase of humoral immunity, the membrane-bound immunoglobulins serve as receptors which, upon binding of a specific antigen, trigger the clonal expansion and differentiation of B lymphocytes into immunoglobulins-secreting plasma cells. Secreted immunoglobulins mediate the effector phase of humoral immunity, which results in the elimination of bound antigens. The antigen binding site is formed by the variable domain of one heavy chain, together with that of its associated light chain. Thus, each immunoglobulin has two antigen binding sites with remarkable affinity for a particular antigen. The variable domains are assembled by a process called V-(D)-J rearrangement and can then be subjected to somatic hypermutations which, after exposure to antigen and selection, allow affinity maturation for a particular antigen. Ig alpha is the major immunoglobulin class in body secretions. This chain is Immunoglobulin heavy constant alpha 2, found in Homo sapiens (Human).